A 146-amino-acid polypeptide reads, in one-letter code: Large ribosomal subunit protein bL19 (146 aa).

Positions alanine 116–glutamate 146 are disordered. Over residues lysine 119 to glutamate 146 the composition is skewed to basic and acidic residues.

In terms of assembly, part of the 50S risobomal subunit. Contacts protein L14. Forms a bridge to the 30S subunit in the 70S ribosome, contacting the 16S rRNA.

Functionally, contacts the 16S rRNA of the 30S subunit (part of bridge B6), connecting the 2 subunits. The protein is Large ribosomal subunit protein bL19 (rplS) of Thermus thermophilus (strain ATCC 27634 / DSM 579 / HB8).